The sequence spans 256 residues: Inner membrane transport permease YadH (256 aa).

The Periplasmic portion of the chain corresponds to 1–22; it reads MMHLYWVALKSIWAKEIHRFMR. One can recognise an ABC transmembrane type-2 domain in the interval 22–251; it reads RIWVQTLVPP…LICWSLIQRG (230 aa). Residues 23 to 43 traverse the membrane as a helical segment; sequence IWVQTLVPPVITMTLYFIIFG. Residues 44–52 lie on the Cytoplasmic side of the membrane; the sequence is NLIGSRIGD. A helical transmembrane segment spans residues 53–73; the sequence is MHGFSYMQFIVPGLIMMSVIT. The Periplasmic portion of the chain corresponds to 74–94; it reads NAYANVASSFFGAKFQRNIEE. A helical transmembrane segment spans residues 95 to 115; the sequence is LLVAPVPTHVIIAGYVGGGVA. Arginine 116 is a topological domain (cytoplasmic). A helical membrane pass occupies residues 117-137; it reads GLFVGILVTAISLFFVPFQVH. Position 138 (serine 138) is a topological domain, periplasmic. Residues 139 to 159 form a helical membrane-spanning segment; that stretch reads WVFVALTLVLTAVLFSLAGLL. Residues 160-169 are Cytoplasmic-facing; it reads NGVFAKTFDD. The helical transmembrane segment at 170 to 190 threads the bilayer; the sequence is ISLVPTFVLTPLTYLGGVFYS. Topologically, residues 191–223 are periplasmic; the sequence is LTLLPPFWQGLSHLNPIVYMISGFRYGFLGIND. The chain crosses the membrane as a helical span at residues 224–244; that stretch reads VPLVTTFGVLVVFIVAFYLIC. Topologically, residues 245–256 are cytoplasmic; the sequence is WSLIQRGRGLRS.

This sequence belongs to the ABC-2 integral membrane protein family.

Its subcellular location is the cell inner membrane. This chain is Inner membrane transport permease YadH (yadH), found in Escherichia coli O157:H7.